A 425-amino-acid chain; its full sequence is Cyclin-K (425 aa).

Positions 262–425 (GKQPIPQQPP…RRYLDDDRNL (164 aa)) are disordered. Positions 366-377 (AEPAAASELDPA) are enriched in low complexity. Over residues 379–399 (GPAPPLPHGAPPPLPHRPPPT) the composition is skewed to pro residues.

Belongs to the cyclin family.

The protein localises to the nucleus. Functionally, regulatory subunit of cyclin-dependent kinases that mediates activation of target kinases. Plays a role in transcriptional regulation via its role in regulating the phosphorylation of the C-terminal domain (CTD) of the large subunit of RNA polymerase II (POLR2A). This Danio rerio (Zebrafish) protein is Cyclin-K (ccnk).